Reading from the N-terminus, the 462-residue chain is PTS system mannitol-specific cryptic EIICB component (462 aa).

Over 1–24 (MENKSARAKVQAFGGFLTAMVIPN) the chain is Cytoplasmic. The PTS EIIC type-2 domain occupies 13–344 (FGGFLTAMVI…LKMEKTVETE (332 aa)). A helical transmembrane segment spans residues 25-46 (IGAFIAWGFITALFIPTGWLPN). Topologically, residues 47–50 (EHFA) are periplasmic. The helical transmembrane segment at 51 to 71 (KIVGPMITYLLPVMIGSTGGH) threads the bilayer. The Cytoplasmic portion of the chain corresponds to 72–134 (LVGGKRGAVM…AGFEMVINNF (63 aa)). Residues 135 to 156 (SLGIAGMLLCLLGFEVIGPAVL) form a helical membrane-spanning segment. Residues 157-165 (IANTFVKEC) are Periplasmic-facing. A helical transmembrane segment spans residues 166 to 186 (IEALVHAGYLPLLSVINEPAK). The Cytoplasmic segment spans residues 187–273 (VLFLNNAIDQ…VLMKPLTIIA (87 aa)). The helical transmembrane segment at 274–293 (MIAGGMSGTWMFNLLDGGLV) threads the bilayer. Residues 294–313 (AGPSPGSIFAYLALTPKGSF) are Periplasmic-facing. The helical transmembrane segment at 314 to 335 (LATIAGVTVGTLVSFAITSLIL) threads the bilayer. The Cytoplasmic portion of the chain corresponds to 336–462 (KMEKTVETES…FNQLTAEHKH (127 aa)). Residues 371–461 (KRIAFVCDAG…LFNQLTAEHK (91 aa)) form the PTS EIIB type-2 domain. Cysteine 377 functions as the Phosphocysteine intermediate; for EIIB activity in the catalytic mechanism. Residue cysteine 377 is modified to Phosphocysteine; by EIIA.

The protein localises to the cell inner membrane. It carries out the reaction D-mannitol(out) + N(pros)-phospho-L-histidyl-[protein] = D-mannitol 1-phosphate(in) + L-histidyl-[protein]. In terms of biological role, the phosphoenolpyruvate-dependent sugar phosphotransferase system (sugar PTS), a major carbohydrate active transport system, catalyzes the phosphorylation of incoming sugar substrates concomitantly with their translocation across the cell membrane. The enzyme II CmtAB PTS system is involved in D-mannitol transport. The sequence is that of PTS system mannitol-specific cryptic EIICB component (cmtA) from Escherichia coli O157:H7.